Reading from the N-terminus, the 263-residue chain is Pyruvate formate-lyase-activating enzyme (263 aa).

The 238-residue stretch at 23-260 (VDGPGIRFVV…TETYEEYKKR (238 aa)) folds into the Radical SAM core domain. Residues Cys-37, Cys-41, and Cys-44 each contribute to the [4Fe-4S] cluster site. Residues 43–45 (YCH), Gly-87, 142–144 (DIK), and His-215 contribute to the S-adenosyl-L-methionine site.

Belongs to the organic radical-activating enzymes family. [4Fe-4S] cluster serves as cofactor.

It localises to the cytoplasm. The catalysed reaction is glycyl-[formate C-acetyltransferase] + reduced [flavodoxin] + S-adenosyl-L-methionine = glycin-2-yl radical-[formate C-acetyltransferase] + semiquinone [flavodoxin] + 5'-deoxyadenosine + L-methionine + H(+). Activation of pyruvate formate-lyase under anaerobic conditions by generation of an organic free radical, using S-adenosylmethionine and reduced flavodoxin as cosubstrates to produce 5'-deoxy-adenosine. The protein is Pyruvate formate-lyase-activating enzyme (act) of Streptococcus mutans serotype c (strain ATCC 700610 / UA159).